Here is a 690-residue protein sequence, read N- to C-terminus: MADSSAIYLAAPESQTGKSTIALGLLHRLTAMVAKVGVFRPITRLSAERDYILELLLAHTSAGLPYERCVGVTYQQLHADRDDAIAEIVDSYHAMADECDAVVVVGSDYTDVTSPTELSVNGRIAVNLGAPVLLTVRAKDRTPDQVASVVEVCLAELDTQRAHTAAVVANRCELSAIPAVTDALRRFTPPSYVVPEEPLLSAPTVAELTQAVNGAVVSGDVALREREVMGVLAAGMTADHVLERLTDGMAVITPGDRSDVVLAVASAHAAEGFPSLSCIVLNGGFQLHPAIAALVSGLRLRLPVIATALGTYDTASAAASARGLVTATSQRKIDTALELMDRHVDVAGLLAQLTIPIPTVTTPQMFTYRLLQQARSDLMRIVLPEGDDDRILKSAGRLLQRGIVDLTILGDEAKVRLRAAELGVDLDGATVIEPCASELHDQFADQYAQLRKAKGITVEHAREIMNDATYFGTMLVHNCHADGMVSGAAHTTAHTVRPALEIIKTVPGISTVSSIFLMCLPDRVLAYGDCAIIPNPTVEQLADIAICSARTAAQFGIEPRVAMLSYSTGDSGKGADVDKVRAATELVRAREPQLPVEGPIQYDAAVEPSVAATKLRDSPVAGRATVLIFPDLNTGNNTYKAVQRSAGAIAIGPVLQGLRKPVNDLSRGALVDDIVNTVAITAIQAQGVHE.

Residues 365-690 (MFTYRLLQQA…TAIQAQGVHE (326 aa)) form a phosphate acetyltransferase region.

This sequence in the N-terminal section; belongs to the CobB/CobQ family. In the C-terminal section; belongs to the phosphate acetyltransferase and butyryltransferase family.

It localises to the cytoplasm. It catalyses the reaction acetyl-CoA + phosphate = acetyl phosphate + CoA. It functions in the pathway metabolic intermediate biosynthesis; acetyl-CoA biosynthesis; acetyl-CoA from acetate: step 2/2. Its function is as follows. Involved in acetate metabolism. The chain is Phosphate acetyltransferase (pta) from Mycobacterium tuberculosis (strain CDC 1551 / Oshkosh).